A 141-amino-acid chain; its full sequence is Hemoglobin subunit alpha-1/2 (141 aa).

One can recognise a Globin domain in the interval 1-141; that stretch reads VLSPADKKNV…VSTVLTSKYR (141 aa). Serine 3 is subject to Phosphoserine. Lysine 7 and lysine 11 each carry N6-succinyllysine. Lysine 16 is subject to N6-acetyllysine; alternate. An N6-succinyllysine; alternate modification is found at lysine 16. Tyrosine 24 is subject to Phosphotyrosine. At serine 35 the chain carries Phosphoserine. Position 40 is an N6-succinyllysine (lysine 40). Serine 49 carries the post-translational modification Phosphoserine. O2 is bound at residue histidine 58. Residue histidine 87 coordinates heme b. Position 102 is a phosphoserine (serine 102). The residue at position 108 (threonine 108) is a Phosphothreonine. Phosphoserine occurs at positions 124 and 131. Threonine 134 and threonine 137 each carry phosphothreonine. Serine 138 carries the phosphoserine modification.

It belongs to the globin family. As to quaternary structure, heterotetramer of two alpha chains and two beta chains. Red blood cells.

Functionally, involved in oxygen transport from the lung to the various peripheral tissues. The polypeptide is Hemoglobin subunit alpha-1/2 (Mandrillus sphinx (Mandrill)).